Consider the following 691-residue polypeptide: MEESPLSRAPSRGGVNFLNVARTYIPNTKVECHYTLPPGTMPSASDWIGIFKVEAACVRDYHTFVWSSVPESTTDGSPIHTSVQFQASYLPKPGAQLYQFRYVNRQGQVCGQSPPFQFREPRPMDELVTLEEADGGSDILLVVPKATVLQNQLDESQQERNDLMQLKLQLEGQVTELRSRVQELERALATARQEHTELMEQYKGISRSHGEITEERDILSRQQGDHVARILELEDDIQTISEKVLTKEVELDRLRDTVKALTREQEKLLGQLKEVQADKEQSEAELQVAQQENHHLNLDLKEAKSWQEEQSAQAQRLKDKVAQMKDTLGQAQQRVAELEPLKEQLRGAQELAASSQQKATLLGEELASAAAARDRTIAELHRSRLEVAEVNGRLAELGLHLKEEKCQWSKERAGLLQSVEAEKDKILKLSAEILRLEKAVQEERTQNQVFKTELAREKDSSLVQLSESKRELTELRSALRVLQKEKEQLQEEKQELLEYMRKLEARLEKVADEKWNEDATTEDEEAAVGLSCPAALTDSEDESPEDMRLPPYGLCERGDPGSSPAGPREASPLVVISQPAPISPHLSGPAEDSSSDSEAEDEKSVLMAAVQSGGEEANLLLPELGSAFYDMASGFTVGTLSETSTGGPATPTWKECPICKERFPAESDKDALEDHMDGHFFFSTQDPFTFE.

Residues 1 to 30 form a p300 KIX-binding region; that stretch reads MEESPLSRAPSRGGVNFLNVARTYIPNTKV. Positions 1-190 are N-terminal AD (CTNNB1 binding site); the sequence is MEESPLSRAP…VQELERALAT (190 aa). Ser4 is subject to Phosphoserine. The interval 45–125 is interaction with GATA1; the sequence is SDWIGIFKVE…FQFREPRPMD (81 aa). Coiled coils occupy residues 145–205, 232–339, and 417–514; these read KATV…YKGI, ELED…AELE, and QSVE…ADEK. The segment at 501-691 is C-terminal AD (CTNNB1 binding site); interaction with CCAR1; it reads RKLEARLEKV…FSTQDPFTFE (191 aa). The disordered stretch occupies residues 514–606; that stretch reads KWNEDATTED…SEAEDEKSVL (93 aa). The UBZ1-type zinc finger occupies 653 to 679; sequence WKECPICKERFPAESDKDALEDHMDGH. Residues Cys656, Cys659, His675, and His679 each coordinate Zn(2+).

This sequence belongs to the CALCOCO family. Part of a calphoglin complex consisting of CALCOCO1, PPA1 and PGM. Interacts with the bHLH-PAS domains of GRIP1, AHR and ARNT. Interacts with CTNNB1 via both its N- and C-terminal regions. Interacts with EP300. Interacts with CCAR1 (via N-terminus) and GATA1.

It localises to the cytoplasm. It is found in the nucleus. Functions as a coactivator for aryl hydrocarbon and nuclear receptors (NR). Recruited to promoters through its contact with the N-terminal basic helix-loop-helix-Per-Arnt-Sim (PAS) domain of transcription factors or coactivators, such as NCOA2. During ER-activation acts synergistically in combination with other NCOA2-binding proteins, such as EP300, CREBBP and CARM1. Involved in the transcriptional activation of target genes in the Wnt/CTNNB1 pathway. Functions as a secondary coactivator in LEF1-mediated transcriptional activation via its interaction with CTNNB1. Coactivator function for nuclear receptors and LEF1/CTNNB1 involves differential utilization of two different activation regions. In association with CCAR1 enhances GATA1- and MED1-mediated transcriptional activation from the gamma-globin promoter during erythroid differentiation of K562 erythroleukemia cells. Its function is as follows. Seems to enhance inorganic pyrophosphatase thus activating phosphogluomutase (PMG). Probably functions as a component of the calphoglin complex, which is involved in linking cellular metabolism (phosphate and glucose metabolism) with other core functions including protein synthesis and degradation, calcium signaling and cell growth. This is Calcium-binding and coiled-coil domain-containing protein 1 (CALCOCO1) from Homo sapiens (Human).